The following is a 201-amino-acid chain: MAFYFDQDDAALEHFDRYFLRQSQEKREHAQELMSLQNLRGGRICLHDIRKPEGQGWESGLKAMECTFHLEKNINQSLLELHQLARENGDPQLCDFLENDFLNQQAKTIKELGGYLSNLHKMGAPEAGLAEYLFNKLTLGRSQKHTRAQTGPTATGCLPLLAPPGGTSMFPFQNILFIFLLSVLPLLAIKLSVLKAIKVSS.

A Ferritin-like diiron domain is found at 1–123; that stretch reads MAFYFDQDDA…GYLSNLHKMG (123 aa).

Belongs to the ferritin family.

In Homo sapiens (Human), this protein is Putative ferritin heavy polypeptide-like 19 (FTH1P19).